The following is a 249-amino-acid chain: tRNA (guanine-N(1)-)-methyltransferase (249 aa).

S-adenosyl-L-methionine contacts are provided by residues Gly121 and 141 to 146 (LGDFVL).

It belongs to the RNA methyltransferase TrmD family. Homodimer.

The protein localises to the cytoplasm. The enzyme catalyses guanosine(37) in tRNA + S-adenosyl-L-methionine = N(1)-methylguanosine(37) in tRNA + S-adenosyl-L-homocysteine + H(+). Specifically methylates guanosine-37 in various tRNAs. The chain is tRNA (guanine-N(1)-)-methyltransferase from Cereibacter sphaeroides (strain ATCC 17023 / DSM 158 / JCM 6121 / CCUG 31486 / LMG 2827 / NBRC 12203 / NCIMB 8253 / ATH 2.4.1.) (Rhodobacter sphaeroides).